The following is a 458-amino-acid chain: UDP-N-acetylglucosamine 1-carboxyvinyltransferase (458 aa).

34–35 (KN) is a phosphoenolpyruvate binding site. Residue arginine 104 participates in UDP-N-acetyl-alpha-D-glucosamine binding. Cysteine 128 functions as the Proton donor in the catalytic mechanism. 2-(S-cysteinyl)pyruvic acid O-phosphothioketal is present on cysteine 128. Residues aspartate 320 and valine 342 each contribute to the UDP-N-acetyl-alpha-D-glucosamine site.

It belongs to the EPSP synthase family. MurA subfamily.

It is found in the cytoplasm. It carries out the reaction phosphoenolpyruvate + UDP-N-acetyl-alpha-D-glucosamine = UDP-N-acetyl-3-O-(1-carboxyvinyl)-alpha-D-glucosamine + phosphate. It participates in cell wall biogenesis; peptidoglycan biosynthesis. Functionally, cell wall formation. Adds enolpyruvyl to UDP-N-acetylglucosamine. This Prochlorococcus marinus (strain NATL2A) protein is UDP-N-acetylglucosamine 1-carboxyvinyltransferase.